The following is a 299-amino-acid chain: ATP phosphoribosyltransferase (299 aa).

Belongs to the ATP phosphoribosyltransferase family. Long subfamily. In terms of assembly, equilibrium between an active dimeric form, an inactive hexameric form and higher aggregates. Interconversion between the various forms is largely reversible and is influenced by the natural substrates and inhibitors of the enzyme. The cofactor is Mg(2+).

Its subcellular location is the cytoplasm. It catalyses the reaction 1-(5-phospho-beta-D-ribosyl)-ATP + diphosphate = 5-phospho-alpha-D-ribose 1-diphosphate + ATP. Its pathway is amino-acid biosynthesis; L-histidine biosynthesis; L-histidine from 5-phospho-alpha-D-ribose 1-diphosphate: step 1/9. Its activity is regulated as follows. Feedback inhibited by histidine. Its function is as follows. Catalyzes the condensation of ATP and 5-phosphoribose 1-diphosphate to form N'-(5'-phosphoribosyl)-ATP (PR-ATP). Has a crucial role in the pathway because the rate of histidine biosynthesis seems to be controlled primarily by regulation of HisG enzymatic activity. The sequence is that of ATP phosphoribosyltransferase from Salmonella enteritidis PT4 (strain P125109).